The sequence spans 430 residues: Probable acetate kinase (430 aa).

N12 provides a ligand contact to Mg(2+). Residue K19 participates in ATP binding. Residue R100 coordinates substrate. D159 functions as the Proton donor/acceptor in the catalytic mechanism. 220 to 224 (HLGSG) is a binding site for ATP. E416 is a binding site for Mg(2+).

The protein belongs to the acetokinase family. It depends on Mg(2+) as a cofactor.

The enzyme catalyses acetate + ATP = acetyl phosphate + ADP. The protein operates within metabolic intermediate biosynthesis; acetyl-CoA biosynthesis; acetyl-CoA from acetate: step 1/2. This chain is Probable acetate kinase, found in Cryptococcus neoformans var. neoformans serotype D (strain B-3501A) (Filobasidiella neoformans).